Reading from the N-terminus, the 140-residue chain is Small ribosomal subunit protein uS12 (140 aa).

The residue at position 102 (Asp-102) is a 3-methylthioaspartic acid.

The protein belongs to the universal ribosomal protein uS12 family. Part of the 30S ribosomal subunit. Contacts proteins S8 and S17. May interact with IF1 in the 30S initiation complex.

With S4 and S5 plays an important role in translational accuracy. Its function is as follows. Interacts with and stabilizes bases of the 16S rRNA that are involved in tRNA selection in the A site and with the mRNA backbone. Located at the interface of the 30S and 50S subunits, it traverses the body of the 30S subunit contacting proteins on the other side and probably holding the rRNA structure together. The combined cluster of proteins S8, S12 and S17 appears to hold together the shoulder and platform of the 30S subunit. In Bacillus cereus (strain G9842), this protein is Small ribosomal subunit protein uS12.